The primary structure comprises 403 residues: Serine/threonine transporter SstT (403 aa).

Transmembrane regions (helical) follow at residues 16–36, 45–65, 79–99, 138–158, 175–195, 214–234, 295–315, 327–347, and 353–373; these read QIVI…AIAL, FVSA…MASI, ILWL…VASM, ALLN…GVAL, GVTL…FGLV, LAVL…LIVF, MAGA…TLGI, MVAA…LLLI, and LFGI…IIGV.

It belongs to the dicarboxylate/amino acid:cation symporter (DAACS) (TC 2.A.23) family.

The protein resides in the cell inner membrane. It carries out the reaction L-serine(in) + Na(+)(in) = L-serine(out) + Na(+)(out). The enzyme catalyses L-threonine(in) + Na(+)(in) = L-threonine(out) + Na(+)(out). Involved in the import of serine and threonine into the cell, with the concomitant import of sodium (symport system). This is Serine/threonine transporter SstT from Pseudomonas putida (strain W619).